The primary structure comprises 346 residues: tRNA N6-adenosine threonylcarbamoyltransferase (346 aa).

A divalent metal cation contacts are provided by His-117, His-121, and Tyr-138. Substrate-binding positions include 138–142 (YVSGG), Asp-170, Gly-185, and Asn-277. An a divalent metal cation-binding site is contributed by Asp-305.

This sequence belongs to the KAE1 / TsaD family. As to quaternary structure, component of the EKC/KEOPS complex composed of at least SPAP27G11.07c/BUD32, cgi121, gon7, pgp2 and SPAC4H3.13/PCC1; the whole complex dimerizes. Requires a divalent metal cation as cofactor.

Its subcellular location is the cytoplasm. The protein resides in the nucleus. It carries out the reaction L-threonylcarbamoyladenylate + adenosine(37) in tRNA = N(6)-L-threonylcarbamoyladenosine(37) in tRNA + AMP + H(+). Component of the EKC/KEOPS complex that is required for the formation of a threonylcarbamoyl group on adenosine at position 37 (t(6)A37) in tRNAs that read codons beginning with adenine. The complex is probably involved in the transfer of the threonylcarbamoyl moiety of threonylcarbamoyl-AMP (TC-AMP) to the N6 group of A37. Pgp2 likely plays a direct catalytic role in this reaction, but requires other protein(s) of the complex to fulfill this activity. The EKC/KEOPS complex also promotes both telomere uncapping and telomere elongation. The complex is required for efficient recruitment of transcriptional coactivators. This is tRNA N6-adenosine threonylcarbamoyltransferase (pgp2) from Schizosaccharomyces pombe (strain 972 / ATCC 24843) (Fission yeast).